We begin with the raw amino-acid sequence, 245 residues long: NAD-dependent protein deacylase (245 aa).

In terms of domain architecture, Deacetylase sirtuin-type spans 1–237 (MNFPYRNIVV…PKLVEELLAH (237 aa)). Residue 13 to 32 (GAGISAESGIQTFRAQDGLW) participates in NAD(+) binding. Residues Tyr-57 and Arg-60 each coordinate substrate. Residue 94 to 97 (QNID) coordinates NAD(+). The Proton acceptor role is filled by His-112. Residues Cys-120 and Cys-139 each coordinate Zn(2+). NAD(+) contacts are provided by residues 179 to 181 (GTS), 205 to 207 (NLE), and Ala-223.

Belongs to the sirtuin family. Class III subfamily. Zn(2+) serves as cofactor.

The protein localises to the cytoplasm. It carries out the reaction N(6)-acetyl-L-lysyl-[protein] + NAD(+) + H2O = 2''-O-acetyl-ADP-D-ribose + nicotinamide + L-lysyl-[protein]. The catalysed reaction is N(6)-succinyl-L-lysyl-[protein] + NAD(+) + H2O = 2''-O-succinyl-ADP-D-ribose + nicotinamide + L-lysyl-[protein]. Its function is as follows. NAD-dependent lysine deacetylase and desuccinylase that specifically removes acetyl and succinyl groups on target proteins. Modulates the activities of several proteins which are inactive in their acylated form. The chain is NAD-dependent protein deacylase from Vibrio vulnificus (strain YJ016).